We begin with the raw amino-acid sequence, 83 residues long: Putative protein T-ENOL (83 aa).

The tract at residues 1–33 (MASTPMGNEGEKKSSWPSQAAPSLRGGPASLSR) is disordered.

This is Putative protein T-ENOL from Homo sapiens (Human).